Here is a 208-residue protein sequence, read N- to C-terminus: NAD(P)H-quinone oxidoreductase subunit I (208 aa).

4Fe-4S ferredoxin-type domains follow at residues 55-84 (GRIHYEFDKCIACEVCVRVCPINLPVVDWV) and 95-124 (RNYSIDFGVCIFCGNCVEYCPTNCLSMTEE). [4Fe-4S] cluster contacts are provided by C64, C67, C70, C74, C104, C107, C110, and C114.

Belongs to the complex I 23 kDa subunit family. NDH-1 is composed of at least 11 different subunits. [4Fe-4S] cluster is required as a cofactor.

It localises to the cellular thylakoid membrane. It carries out the reaction a plastoquinone + NADH + (n+1) H(+)(in) = a plastoquinol + NAD(+) + n H(+)(out). The catalysed reaction is a plastoquinone + NADPH + (n+1) H(+)(in) = a plastoquinol + NADP(+) + n H(+)(out). In terms of biological role, NDH-1 shuttles electrons from an unknown electron donor, via FMN and iron-sulfur (Fe-S) centers, to quinones in the respiratory and/or the photosynthetic chain. The immediate electron acceptor for the enzyme in this species is believed to be plastoquinone. Couples the redox reaction to proton translocation, and thus conserves the redox energy in a proton gradient. The protein is NAD(P)H-quinone oxidoreductase subunit I of Prochlorococcus marinus (strain MIT 9301).